Here is a 225-residue protein sequence, read N- to C-terminus: MADS-box transcription factor 5 (225 aa).

The MADS-box domain maps to 1–61 (MGRGKVELKR…GRLFEFSTSS (61 aa)). The K-box domain maps to 89-179 (ELSNYQEYLK…KRKIQETSGE (91 aa)).

In terms of assembly, may interact with the K-box of MADS6.

It localises to the nucleus. Probable transcription factor. In Oryza sativa subsp. indica (Rice), this protein is MADS-box transcription factor 5 (MADS5).